The following is a 236-amino-acid chain: Purine nucleoside phosphorylase DeoD-type (236 aa).

Position 5 (His5) interacts with a purine D-ribonucleoside. Phosphate-binding positions include Gly21, Arg25, Arg44, and 88 to 91 (RVGT). A purine D-ribonucleoside contacts are provided by residues 180-182 (EME) and 204-205 (SD). Asp205 serves as the catalytic Proton donor.

Belongs to the PNP/UDP phosphorylase family. As to quaternary structure, homohexamer; trimer of homodimers.

It carries out the reaction a purine D-ribonucleoside + phosphate = a purine nucleobase + alpha-D-ribose 1-phosphate. It catalyses the reaction a purine 2'-deoxy-D-ribonucleoside + phosphate = a purine nucleobase + 2-deoxy-alpha-D-ribose 1-phosphate. In terms of biological role, catalyzes the reversible phosphorolytic breakdown of the N-glycosidic bond in the beta-(deoxy)ribonucleoside molecules, with the formation of the corresponding free purine bases and pentose-1-phosphate. In Shewanella denitrificans (strain OS217 / ATCC BAA-1090 / DSM 15013), this protein is Purine nucleoside phosphorylase DeoD-type.